A 252-amino-acid chain; its full sequence is Undecaprenyl-diphosphatase (252 aa).

7 consecutive transmembrane segments (helical) span residues 1–21 (MTTLEAVILGIVEGLTEFLPI), 42–62 (HKAFEVSIQLGSILAVVFLYF), 74–94 (ILIAFIPTGILGFVLYKIIKS), 95–115 (LFNPYIVVFMLVFGGLLLILI), 172–192 (AAEFSFMLAVPTMFMATFYDV), 206–226 (NLIVGFVVAFISALFAIKWLL), and 232–252 (HSFIPFGIYRIILGILYYLWY).

The protein belongs to the UppP family.

It is found in the cell inner membrane. It carries out the reaction di-trans,octa-cis-undecaprenyl diphosphate + H2O = di-trans,octa-cis-undecaprenyl phosphate + phosphate + H(+). In terms of biological role, catalyzes the dephosphorylation of undecaprenyl diphosphate (UPP). Confers resistance to bacitracin. In Sulfurihydrogenibium sp. (strain YO3AOP1), this protein is Undecaprenyl-diphosphatase.